A 564-amino-acid polypeptide reads, in one-letter code: MFS-type transporter kojT (564 aa).

N113 carries N-linked (GlcNAc...) asparagine glycosylation. The next 12 membrane-spanning stretches (helical) occupy residues 120-140 (WATLGIVGTTGMLVGWASSID), 159-179 (SLATALFLFAFGFGSLVAAPF), 187-207 (PVYIATLSILMIFTMASGLAP), 217-237 (FLAGLFGCTPMTTFGGSMADI), 249-269 (VCCTLSFLGPFLAPMVGAFIG), 278-298 (WTEWCTLIMAALVTGAIFLFV), 353-373 (IMVALFTMYLVVVYIVLFGFL), 389-409 (GSVGLTFIGMNIGFLIAFAMV), 437-457 (LWFAMYGAPWLPISLFWMGWT), 462-482 (ISYWSPLVASVAFGFSVQGIF), 500-520 (ALVSATFFRYIAAGAMVIVSI), and 530-550 (WSLTLLGCISVLMTPVPYIFY).

Belongs to the major facilitator superfamily.

Its subcellular location is the cell membrane. MFS-type transporter; part of the gene cluster that mediates the biosynthesis of 5-hydroxy-2-hydroxymethyl-1,4-pyrone, also know as kojic acid, a by-product in the fermentation process of malting rice that acts as a chelation agent. Involved in the seretion of kojic acid. The chain is MFS-type transporter kojT from Aspergillus flavus (strain ATCC 200026 / FGSC A1120 / IAM 13836 / NRRL 3357 / JCM 12722 / SRRC 167).